The sequence spans 392 residues: L-rhamnonate dehydratase (392 aa).

2 residues coordinate substrate: H22 and R48. D214, E240, and E268 together coordinate Mg(2+). Residue H318 is the Proton acceptor of the active site. E338 serves as a coordination point for substrate.

This sequence belongs to the mandelate racemase/muconate lactonizing enzyme family. RhamD subfamily. As to quaternary structure, homooctamer; tetramer of dimers. The cofactor is Mg(2+).

It carries out the reaction L-rhamnonate = 2-dehydro-3-deoxy-L-rhamnonate + H2O. Its function is as follows. Catalyzes the dehydration of L-rhamnonate to 2-keto-3-deoxy-L-rhamnonate (KDR). This chain is L-rhamnonate dehydratase, found in Burkholderia ambifaria (strain ATCC BAA-244 / DSM 16087 / CCUG 44356 / LMG 19182 / AMMD) (Burkholderia cepacia (strain AMMD)).